Consider the following 437-residue polypeptide: Keratin, type I cytoskeletal 13 (437 aa).

The tract at residues 1-95 (MSCRFQSSSM…GVDGGLLSGN (95 aa)) is head. Omega-N-methylarginine occurs at positions 27 and 35. The tract at residues 96 to 131 (EKITMQNLNDRLASYLDKVRALEAANADLEVKIRDW) is coil 1A. Residues 96 to 408 (EKITMQNLND…SLLEGQDAKM (313 aa)) enclose the IF rod domain. Residues 132–150 (HLKQSPASPERDYSAYYKT) are linker 1. A coil 1B region spans residues 151–242 (IEELRIKILE…KNHEEEMKEF (92 aa)). The tract at residues 243-265 (SNQVVGQVNVEMDATPGIDLTRV) is linker 12. Residues 266-404 (LAEMREQYEA…ATYRSLLEGQ (139 aa)) form a coil 2 region. Residues 405–437 (DAKMTGFNSGGNNTTTSNGSPSSNSGRPDFRKY) form a tail region. The disordered stretch occupies residues 408-437 (MTGFNSGGNNTTTSNGSPSSNSGRPDFRKY). The segment covering 409 to 430 (TGFNSGGNNTTTSNGSPSSNSG) has biased composition (low complexity).

The protein belongs to the intermediate filament family. Heterotetramer of two type I and two type II keratins. In terms of processing, O-glycosylated; glycans consist of single N-acetylglucosamine residues. As to expression, expressed in tongue epithelia (at protein level). Expressed in upper suprabasal layers of the corneal epithelium (at protein level).

Functionally, type 1 keratin. Maintains postnatal tongue mucosal cell homeostasis and tissue organization in response to mechanical stress, potentially via regulation of the G1/S phase cyclins CCNE1 and CCNE2. This chain is Keratin, type I cytoskeletal 13 (Krt13), found in Mus musculus (Mouse).